The chain runs to 95 residues: Signal recognition particle 19 kDa protein (95 aa).

The protein belongs to the SRP19 family. Part of the signal recognition particle protein translocation system, which is composed of SRP and FtsY. Archaeal SRP consists of a 7S RNA molecule of 300 nucleotides and two protein subunits: SRP54 and SRP19.

Its subcellular location is the cytoplasm. Its function is as follows. Involved in targeting and insertion of nascent membrane proteins into the cytoplasmic membrane. Binds directly to 7S RNA and mediates binding of the 54 kDa subunit of the SRP. The protein is Signal recognition particle 19 kDa protein of Pyrobaculum islandicum (strain DSM 4184 / JCM 9189 / GEO3).